The sequence spans 54 residues: UPF0391 membrane protein Sde_0270 (54 aa).

2 helical membrane passes run 6–26 (IVFL…IAGV) and 29–49 (GIAK…LVIG).

It belongs to the UPF0391 family.

It is found in the cell membrane. The chain is UPF0391 membrane protein Sde_0270 from Saccharophagus degradans (strain 2-40 / ATCC 43961 / DSM 17024).